Reading from the N-terminus, the 180-residue chain is Putative protein 33K (180 aa).

The segment at 31-108 (LEEAYKQLEK…AKAPRNYGTP (78 aa)) is disordered. The span at 33–43 (EAYKQLEKELG) shows a compositional bias: basic and acidic residues. The span at 60-78 (PLSEGELEEISEEEEEEGE) shows a compositional bias: acidic residues.

This Pantherophis guttatus (Corn snake) protein is Putative protein 33K.